Reading from the N-terminus, the 284-residue chain is S-formylglutathione hydrolase (284 aa).

N-acetylalanine is present on A2. Substrate is bound by residues N63 and K67. Active-site charge relay system residues include S152, D229, and H262.

This sequence belongs to the esterase D family. Homodimer.

The enzyme catalyses S-formylglutathione + H2O = formate + glutathione + H(+). Activity toward p-nitrophenyl acetate inhibited by N-ethylmaleimide, 10-(fluoroethoxyphosphinyl)-N-(biotinamidopentyl)decanamide (FP-biotin), iodoacetamide, CuCl(2) and ZnSO(4), but not by phenylmethylsulfonyl fluoride, EDTA, Mg(2+), Mn(2+), Ca(2+) or paraoxon, an organo-phosphate inhibitor of serine hydrolases. Its function is as follows. Serine hydrolase which catalyzes the hydrolysis of S-formylglutathione to glutathione and formic acid. Also hydrolyzes S-acetylglutathione and a range of carboxyesters in vitro. Involved in the detoxification of formaldehyde. The protein is S-formylglutathione hydrolase (SFGH) of Arabidopsis thaliana (Mouse-ear cress).